The following is a 1056-amino-acid chain: PAX-interacting protein 1 (1056 aa).

BRCT domains follow at residues 8-93 and 94-183; these read VPEE…GFSP and ESCQ…FYHP. The segment at 94–183 is interaction with PAGR1; the sequence is ESCQIFFGLT…RRKDEAFYHP (90 aa). Residues 188–205 show a composition bias toward acidic residues; sequence YEEEEEEEEEGDNEEQDS. Disordered stretches follow at residues 188–276, 393–412, and 419–486; these read YEEE…QRRL, THVLQQHHPPQQPQQQHPAL, and MQLQ…FQQQ. Positions 214–223 are enriched in low complexity; sequence SSVASSAVAS. Phosphoserine occurs at positions 223 and 230. Composition is skewed to low complexity over residues 396-412, 419-435, and 445-486; these read LQQHHPPQQPQQQHPAL, MQLQQQQQQQQQQQQQP, and QFPQ…FQQQ. The interaction with TP53BP1 stretch occupies residues 577-1056; that stretch reads QLFGHDPAVE…TLDYESYKFN (480 aa). BRCT domains are found at residues 588–681, 688–776, 853–934, and 955–989; these read PEES…RALH, PGGK…VQYS, TPLV…NYIL, and HVSPLFKTKYFYITPGICPSLATMKAIVECAGGKV. Residues 655-672 carry the Nuclear localization signal motif; the sequence is RKRCVTAHWLNTVLKKKK.

As to quaternary structure, interacts with the C-terminal transactivation domain of PAX2. Forms a constitutive complex with PAGR1 independently of the MLL2/MLL3 complex. Interacts with TP53BP1 (when phosphorylated at the N-terminus by ATM). Interacts with HLTF. Component of the KMT2 family MLL2/MLL3 complex (also named ASCOM complex), at least composed of the HMTs KMT2D and/or KMT2C, the common subunits ASH2L, RBBP5, WDR5 and DPY30, and the complex type-specific subunits PAXIP1/PTIP, PAGR1, NCOA6 and KDM6A; required for the association of PAGR1 with the MLL2/MLL3 complex. Interacts with NUPR1; this interaction prevents PAXIP1 inhibition of PAX2 transcription factor activity. In terms of tissue distribution, expression detected in all tissues examined, including brain stem, cerebellum, cortex, heart, spleen, kidney, liver, thymus and lung.

The protein resides in the nucleus matrix. It is found in the chromosome. Its function is as follows. Involved in DNA damage response and in transcriptional regulation through histone methyltransferase (HMT) complexes such as the MLL2/MLL3 complex. Plays a role in early development. In DNA damage response is required for cell survival after ionizing radiation. In vitro shown to be involved in the homologous recombination mechanism for the repair of double-strand breaks (DSBs). Its localization to DNA damage foci requires Rnf8 and Ube2n. Recruits Tp53bp1 to DNA damage foci and, at least in particular repair processes, effective DNA damage response appears to require the association with Tp53bp1 phosphorylated by Atm. Together with Tp53bp1 regulates Atm association. Proposed to recruit Pagr1 to sites of DNA damage and the Pagr1:Paxip1 complex is required for cell survival in response to DNA damage independently of the MLL2/MLL3 complex. However, this function has been questioned. Promotes ubiquitination of PCNA following UV irradiation and may regulate recruitment of polymerase eta and Rad51 to chromatin after DNA damage. Proposed to be involved in transcriptional regulation by linking MLL-containing histone methyltransferase (HMT) complexes to gene promoters by interacting with promoter-bound transcription factors such as Pax2. Associates with gene promoters that are known to be regulated by Kmt2d/Mll2. During immunoglobulin class switching in activated B-cells is involved in trimethylation of histone H3 at 'Lys-4' and in transcription initiation of downstream switch regions at the immunoglobulin heavy-chain (Igh) locus; this function appears to involve the recruitment of MLL-containing HMT complexes. Conflictingly, its function in transcriptional regulation during immunoglobulin class switching is reported to be independent of the MLL2/MLL3 complex. The polypeptide is PAX-interacting protein 1 (Paxip1) (Mus musculus (Mouse)).